Reading from the N-terminus, the 775-residue chain is Meiotic driver SPOK2 (775 aa).

Residues 4 to 69 (KDRIAQLLRE…RCERERLQLE (66 aa)) adopt a coiled-coil conformation. Disordered stretches follow at residues 18–51 (KARE…REEE), 211–249 (QKDD…YICS), 442–525 (LSSA…AMAD), and 734–761 (PPPK…AQLF). Residues 444–457 (SAPSSQNTDISEYT) show a composition bias toward polar residues.

Its subcellular location is the cytoplasm. It localises to the nucleus. Promotes unequal transmission of alleles from the parental zygote to progeny spores by acting as poison/antidote system, leading to poisoning of progeny that do not inherit the allele. May possess DNA nuclease activity that leads to spore killing, and a kinase activity that confers resistance to the nuclease activity. This Podospora anserina (strain S / ATCC MYA-4624 / DSM 980 / FGSC 10383) (Pleurage anserina) protein is Meiotic driver SPOK2.